The primary structure comprises 88 residues: Small ribosomal subunit protein uS15 (88 aa).

The protein belongs to the universal ribosomal protein uS15 family. As to quaternary structure, part of the 30S ribosomal subunit. Forms a bridge to the 50S subunit in the 70S ribosome, contacting the 23S rRNA.

One of the primary rRNA binding proteins, it binds directly to 16S rRNA where it helps nucleate assembly of the platform of the 30S subunit by binding and bridging several RNA helices of the 16S rRNA. Its function is as follows. Forms an intersubunit bridge (bridge B4) with the 23S rRNA of the 50S subunit in the ribosome. In Geotalea uraniireducens (strain Rf4) (Geobacter uraniireducens), this protein is Small ribosomal subunit protein uS15.